Here is a 190-residue protein sequence, read N- to C-terminus: Peptide deformylase (190 aa).

Fe cation contacts are provided by Cys-106 and His-148. Glu-149 is an active-site residue. Position 152 (His-152) interacts with Fe cation.

It belongs to the polypeptide deformylase family. Fe(2+) serves as cofactor.

The catalysed reaction is N-terminal N-formyl-L-methionyl-[peptide] + H2O = N-terminal L-methionyl-[peptide] + formate. In terms of biological role, removes the formyl group from the N-terminal Met of newly synthesized proteins. Requires at least a dipeptide for an efficient rate of reaction. N-terminal L-methionine is a prerequisite for activity but the enzyme has broad specificity at other positions. This is Peptide deformylase from Methylacidiphilum infernorum (isolate V4) (Methylokorus infernorum (strain V4)).